The following is a 163-amino-acid chain: Protein-export protein SecB (163 aa).

Belongs to the SecB family. As to quaternary structure, homotetramer, a dimer of dimers. One homotetramer interacts with 1 SecA dimer.

It localises to the cytoplasm. Its function is as follows. One of the proteins required for the normal export of preproteins out of the cell cytoplasm. It is a molecular chaperone that binds to a subset of precursor proteins, maintaining them in a translocation-competent state. It also specifically binds to its receptor SecA. This chain is Protein-export protein SecB, found in Burkholderia cenocepacia (strain ATCC BAA-245 / DSM 16553 / LMG 16656 / NCTC 13227 / J2315 / CF5610) (Burkholderia cepacia (strain J2315)).